The sequence spans 544 residues: Chaperonin GroEL 2 (544 aa).

ATP contacts are provided by residues 29–32 (TLGP), 86–90 (DGTTT), glycine 413, 479–481 (NAA), and aspartate 495.

This sequence belongs to the chaperonin (HSP60) family. As to quaternary structure, forms a cylinder of 14 subunits composed of two heptameric rings stacked back-to-back. Interacts with the co-chaperonin GroES.

It localises to the cytoplasm. It catalyses the reaction ATP + H2O + a folded polypeptide = ADP + phosphate + an unfolded polypeptide.. Functionally, together with its co-chaperonin GroES, plays an essential role in assisting protein folding. The GroEL-GroES system forms a nano-cage that allows encapsulation of the non-native substrate proteins and provides a physical environment optimized to promote and accelerate protein folding. The chain is Chaperonin GroEL 2 from Synechococcus sp. (strain WH7803).